A 307-amino-acid polypeptide reads, in one-letter code: Fructokinase (307 aa).

This sequence belongs to the carbohydrate kinase PfkB family.

The enzyme catalyses D-fructose + ATP = D-fructose 6-phosphate + ADP + H(+). This is Fructokinase (cscK) from Escherichia coli.